The following is a 612-amino-acid chain: DEAD-box ATP-dependent RNA helicase 11 (612 aa).

Disordered regions lie at residues 1–70 (MSAS…SGGG) and 83–104 (GAGG…WDRR). Ser-2 carries the post-translational modification N-acetylserine. 2 stretches are compositionally biased toward gly residues: residues 61–70 (SGGGGASGGG) and 83–94 (GAGGGGGGGGGW). Positions 151-179 (NTFADIDLGDALNLNIRRCKYVRPTPVQR) match the Q motif motif. Positions 182-366 (IPILLAERDL…ADFMSNYIFL (185 aa)) constitute a Helicase ATP-binding domain. Position 195-202 (195-202 (AQTGSGKT)) interacts with ATP. The short motif at 310–313 (DEAD) is the DEAD box element. Residues 377–542 (LITQRVEFVQ…EVPEWLTRYA (166 aa)) enclose the Helicase C-terminal domain. The segment at 547-583 (FGGGKKRSGGRFGGRDFRREGSYSRGGGGGGGGGGSD) is disordered. The span at 559–568 (GGRDFRREGS) shows a compositional bias: basic and acidic residues. Positions 570–583 (SRGGGGGGGGGGSD) are enriched in gly residues.

Belongs to the DEAD box helicase family. DDX3/DED1 subfamily.

It catalyses the reaction ATP + H2O = ADP + phosphate + H(+). The protein is DEAD-box ATP-dependent RNA helicase 11 (RH11) of Arabidopsis thaliana (Mouse-ear cress).